Consider the following 404-residue polypeptide: uncharacterized protein (404 aa).

The protein belongs to the lymphocryptovirus BTRF1 family.

This is an uncharacterized protein from Homo sapiens (Human).